The chain runs to 138 residues: Large ribosomal subunit protein uL16 (138 aa).

The span at 1 to 16 shows a compositional bias: basic residues; sequence MLIPRRVKHRKQHHPG. Residues 1-24 are disordered; it reads MLIPRRVKHRKQHHPGRSGAATGG.

It belongs to the universal ribosomal protein uL16 family. Part of the 50S ribosomal subunit.

Functionally, binds 23S rRNA and is also seen to make contacts with the A and possibly P site tRNAs. In Arthrobacter sp. (strain FB24), this protein is Large ribosomal subunit protein uL16.